The sequence spans 119 residues: Large ribosomal subunit protein uL18 (119 aa).

The protein belongs to the universal ribosomal protein uL18 family. In terms of assembly, part of the 50S ribosomal subunit; part of the 5S rRNA/L5/L18/L25 subcomplex. Contacts the 5S and 23S rRNAs.

Functionally, this is one of the proteins that bind and probably mediate the attachment of the 5S RNA into the large ribosomal subunit, where it forms part of the central protuberance. This Xanthomonas campestris pv. campestris (strain 8004) protein is Large ribosomal subunit protein uL18.